We begin with the raw amino-acid sequence, 162 residues long: G/U mismatch-specific DNA glycosylase (162 aa).

Belongs to the uracil-DNA glycosylase (UDG) superfamily. TDG/mug family. In terms of assembly, binds DNA as a monomer.

It is found in the cytoplasm. It carries out the reaction Specifically hydrolyzes mismatched double-stranded DNA and polynucleotides, releasing free uracil.. Excises ethenocytosine and uracil, which can arise by alkylation or deamination of cytosine, respectively, from the corresponding mispairs with guanine in ds-DNA. It is capable of hydrolyzing the carbon-nitrogen bond between the sugar-phosphate backbone of the DNA and the mispaired base. The complementary strand guanine functions in substrate recognition. Required for DNA damage lesion repair in stationary-phase cells. This chain is G/U mismatch-specific DNA glycosylase, found in Serratia proteamaculans (strain 568).